Consider the following 64-residue polypeptide: Large ribosomal subunit protein bL35 (64 aa).

Positions 22-44 (IMKQQAGMRHNLEVKSSKRKARL) are disordered.

This sequence belongs to the bacterial ribosomal protein bL35 family.

The protein is Large ribosomal subunit protein bL35 of Clavibacter sepedonicus (Clavibacter michiganensis subsp. sepedonicus).